We begin with the raw amino-acid sequence, 151 residues long: Ribonuclease H (151 aa).

The 141-residue stretch at 1-141 (MKHVDIFTDG…ADELARRGME (141 aa)) folds into the RNase H type-1 domain. Mg(2+) contacts are provided by D9, E47, D69, and D133.

It belongs to the RNase H family. In terms of assembly, monomer. The cofactor is Mg(2+).

The protein resides in the cytoplasm. It catalyses the reaction Endonucleolytic cleavage to 5'-phosphomonoester.. Its function is as follows. Endonuclease that specifically degrades the RNA of RNA-DNA hybrids. This chain is Ribonuclease H, found in Rhizobium etli (strain ATCC 51251 / DSM 11541 / JCM 21823 / NBRC 15573 / CFN 42).